Here is a 467-residue protein sequence, read N- to C-terminus: Glutamate--tRNA ligase (467 aa).

A 'HIGH' region motif is present at residues Pro-9–Gly-19. A 'KMSKS' region motif is present at residues Lys-237–Arg-241. Position 240 (Lys-240) interacts with ATP.

It belongs to the class-I aminoacyl-tRNA synthetase family. Glutamate--tRNA ligase type 1 subfamily. As to quaternary structure, monomer.

It is found in the cytoplasm. It carries out the reaction tRNA(Glu) + L-glutamate + ATP = L-glutamyl-tRNA(Glu) + AMP + diphosphate. Its function is as follows. Catalyzes the attachment of glutamate to tRNA(Glu) in a two-step reaction: glutamate is first activated by ATP to form Glu-AMP and then transferred to the acceptor end of tRNA(Glu). This chain is Glutamate--tRNA ligase, found in Xanthomonas campestris pv. campestris (strain 8004).